Consider the following 364-residue polypeptide: MRRVHITVILLAAVIFLLVLHHNILGLSDILKRQNSDTGPLVFQRLESLPDAPDIGPEHGHGEEIAVVIPGVEERLGGLIATINSISSNTKSNVVFYIITTNDTKKHISSWLDGTDLKRVAYKLLTFDARVLDGKVRVDAGAEPVKPMTFARFYLPSLLPGAKKVIYLDDDVIVQDDIVQLYNTPISPGHAAAFSEDCDSVTSKFPVRGGANQYNYIGFLDYKKERIRSLGIKANTCSFNPGVFVANLTEWRRQNITRQLEKWMELDVTEELYSKSLSGNIAAPPLLIVFYRLYSNINPLWHVRHLGSSTGKRYSPQFVKAAKLLHWNGHFKPWGRTSSFPEIWEKWFLPDPSGQFSLIRRHAE.

The Cytoplasmic segment spans residues methionine 1–histidine 5. Residues isoleucine 6–glycine 26 traverse the membrane as a helical; Signal-anchor for type II membrane protein segment. At leucine 27–glutamate 364 the chain is on the lumenal side. N-linked (GlcNAc...) asparagine glycans are attached at residues asparagine 102, asparagine 247, and asparagine 255.

Belongs to the glycosyltransferase 8 family.

The protein localises to the membrane. In Xenopus laevis (African clawed frog), this protein is Glycosyltransferase 8 domain-containing protein 1 (glt8d1).